The sequence spans 487 residues: Glycogen synthase (487 aa).

Residue lysine 15 participates in ADP-alpha-D-glucose binding.

It belongs to the glycosyltransferase 1 family. Bacterial/plant glycogen synthase subfamily.

The enzyme catalyses [(1-&gt;4)-alpha-D-glucosyl](n) + ADP-alpha-D-glucose = [(1-&gt;4)-alpha-D-glucosyl](n+1) + ADP + H(+). It participates in glycan biosynthesis; glycogen biosynthesis. Synthesizes alpha-1,4-glucan chains using ADP-glucose. This Leptothrix cholodnii (strain ATCC 51168 / LMG 8142 / SP-6) (Leptothrix discophora (strain SP-6)) protein is Glycogen synthase.